The sequence spans 689 residues: Glycine--tRNA ligase beta subunit (689 aa).

It belongs to the class-II aminoacyl-tRNA synthetase family. In terms of assembly, tetramer of two alpha and two beta subunits.

Its subcellular location is the cytoplasm. The catalysed reaction is tRNA(Gly) + glycine + ATP = glycyl-tRNA(Gly) + AMP + diphosphate. The chain is Glycine--tRNA ligase beta subunit from Salmonella typhi.